The chain runs to 476 residues: Growth/differentiation factor 10 (476 aa).

An N-terminal signal peptide occupies residues 1–29; it reads MAPGPARISLGSQLLPMVPLLLLLRGAGC. Positions 30–366 are excised as a propeptide; the sequence is GHRGPSWSSL…EKTMQKARRR (337 aa). The tract at residues 39 to 63 is disordered; the sequence is LPSAAAGLQGDRDSQQSPGDAAAAL. N-linked (GlcNAc...) asparagine glycans are attached at residues Asn114, Asn152, and Asn277. The segment at 268–301 is disordered; sequence GDFEPGAAPNSSADPRVRRAAQVSKPLQDNELPG. 3 disulfides stabilise this stretch: Cys374-Cys441, Cys403-Cys473, and Cys407-Cys475. N-linked (GlcNAc...) asparagine glycosylation is present at Asn467.

This sequence belongs to the TGF-beta family. In terms of assembly, homodimer or heterodimer. Can form a non-covalent complex of the mature region and the pro-region. As to expression, highly expressed in epididymal adipose tissue, brain, bone and aorta and to a lesser extent in liver and spleen. Expressed at higher levels in preadipocytes than in mature adipocytes. Strongly expressed in glial cells of the cerebellum.

The protein resides in the secreted. Functionally, growth factor involved in osteogenesis and adipogenesis. Plays an inhibitory role in the process of osteoblast differentiation via SMAD2/3 pathway. Plays an inhibitory role in the process of adipogenesis. The protein is Growth/differentiation factor 10 of Mus musculus (Mouse).